Here is a 1598-residue protein sequence, read N- to C-terminus: Fatty acid synthase subunit alpha (1598 aa).

The interval 96-134 is disordered; the sequence is RTQPHKSSAPQEPVPKAAPKAAPPVPVATAPLPEPGRQV. Residues 104–115 are compositionally biased toward low complexity; it reads APQEPVPKAAPK. Positions 143-221 constitute a Carrier domain; the sequence is DVPIQSRDVI…QIVSGSTSTT (79 aa). Ser181 bears the O-(pantetheine 4'-phosphoryl)serine mark. A ketoreductase (KR) domain region spans residues 543-784; the sequence is LKGKTVLLTG…LAALLVNPFA (242 aa). A disordered region spans residues 818–844; the sequence is KQDSTSTPTHQHLPSHHHVDEPEIGKP. Over residues 820–829 the composition is skewed to polar residues; that stretch reads DSTSTPTHQH. In terms of domain architecture, Ketosynthase family 3 (KS3) spans 992–1524; sequence HEIVLTRDLA…QKGAQAIIVH (533 aa). The For beta-ketoacyl synthase activity role is filled by Cys1175. The tract at residues 1280-1301 is disordered; it reads ASDKTGRSVPSPGKGTLTNARE. Active-site for beta-ketoacyl synthase activity residues include His1409 and His1450.

Belongs to the thiolase-like superfamily. Fungal fatty acid synthetase subunit alpha family. As to quaternary structure, fatty acid synthase is composed of alpha and beta subunits.

The catalysed reaction is acetyl-CoA + n malonyl-CoA + 2n NADPH + 4n H(+) = a long-chain-acyl-CoA + n CoA + n CO2 + 2n NADP(+).. It carries out the reaction a fatty acyl-[ACP] + malonyl-[ACP] + H(+) = a 3-oxoacyl-[ACP] + holo-[ACP] + CO2. It catalyses the reaction a (3R)-hydroxyacyl-[ACP] + NADP(+) = a 3-oxoacyl-[ACP] + NADPH + H(+). The protein operates within mycotoxin biosynthesis. Fatty acid synthase subunit alpha; part of the gene cluster that mediates the biosynthesis of gramillins A and B, bicyclic lipopeptides that induce cell death in maize leaves but not in wheat leaves. The nonribosomal peptide synthetase GRA1 incorporates respectively a glutamic adic (Glu), a leucine (Leu), a serine (Ser), a hydroxyglutamine (HOGln), a 2-amino decanoic acid, and 2 cysteins (CysB and CysA). The biosynthesis of 2-amino decanoic acid incorporated in gramillins could be initiated by a fatty acid synthase composed of the alpha and beta subunits FGSG_00036 and FGSG_11656. The cytochrome P450 monooxygenase FGSG_15680 could hydroxylate the fatty acid chain. Subsequent oxidation to the ketone by the oxidoreductase FGSG_00048 and transamination by aminotransferase FGSG_00049 could form 2-amino-decanoic acid. On the other hand, FGSG_15680 could also be responsible for the HO-modified glutamine at the gamma-position. Whether hydroxylation occurs on the fully assembled product or on the Gln residue prior to assembly into the gramillins requires further proof. The thioredoxin FGSG_00043 could also be required for the disulfide-bond formation between CysA and CysB. The specific involvement of the remaining proteins from the cluster is more difficult to discern, but could have broader regulatory (FGSG_00040 and FGSG_11657) or enzymatic functions (FGSG_00044 and FGSG_00045). The final C-domain of GRA1 does not possess the expected sequence of a termination CT domain, often implicated in macrocyclization and release of a cyclopeptidein fungal NRPs; and the thioesterase FGSG_00047 may act in concert with the terminal C-domain of GRA1 to catalyze the formation of the macrocyclic anhydride and release of the products. This is Fatty acid synthase subunit alpha from Gibberella zeae (strain ATCC MYA-4620 / CBS 123657 / FGSC 9075 / NRRL 31084 / PH-1) (Wheat head blight fungus).